The sequence spans 645 residues: 1-deoxy-D-xylulose-5-phosphate synthase 2 (645 aa).

Thiamine diphosphate is bound by residues H79 and 120 to 122 (GHS). D151 provides a ligand contact to Mg(2+). Residues 152 to 153 (GS), N180, Y291, and E373 each bind thiamine diphosphate. N180 is a Mg(2+) binding site.

The protein belongs to the transketolase family. DXPS subfamily. Homodimer. The cofactor is Mg(2+). It depends on thiamine diphosphate as a cofactor.

It catalyses the reaction D-glyceraldehyde 3-phosphate + pyruvate + H(+) = 1-deoxy-D-xylulose 5-phosphate + CO2. The protein operates within metabolic intermediate biosynthesis; 1-deoxy-D-xylulose 5-phosphate biosynthesis; 1-deoxy-D-xylulose 5-phosphate from D-glyceraldehyde 3-phosphate and pyruvate: step 1/1. Its function is as follows. Catalyzes the acyloin condensation reaction between C atoms 2 and 3 of pyruvate and glyceraldehyde 3-phosphate to yield 1-deoxy-D-xylulose-5-phosphate (DXP). The sequence is that of 1-deoxy-D-xylulose-5-phosphate synthase 2 from Rhodospirillum rubrum (strain ATCC 11170 / ATH 1.1.1 / DSM 467 / LMG 4362 / NCIMB 8255 / S1).